Consider the following 100-residue polypeptide: Small ribosomal subunit protein uS14c (100 aa).

Belongs to the universal ribosomal protein uS14 family. In terms of assembly, part of the 30S ribosomal subunit.

Its subcellular location is the plastid. Binds 16S rRNA, required for the assembly of 30S particles. The polypeptide is Small ribosomal subunit protein uS14c (Epifagus virginiana (Beechdrops)).